A 248-amino-acid chain; its full sequence is Adenosylcobinamide-GDP ribazoletransferase (248 aa).

Transmembrane regions (helical) follow at residues 32 to 52 (FPLVGLLLGLLQAALAWIGMV), 60 to 80 (ALLVLLSGVLLTRAIHADGLA), 103 to 123 (AVGSFGVIALILLFLFKWIAL), 134 to 154 (WIVSGIVLARFVQVVLASVMT), 170 to 190 (AGGWHVVVAALFSLLILVLVM), 195 to 215 (LPIVVALLATAVSGSLTGMLA), and 227 to 247 (LGASSEMTEALVWCSALLLLF).

This sequence belongs to the CobS family. Mg(2+) serves as cofactor.

It is found in the cell inner membrane. The enzyme catalyses alpha-ribazole + adenosylcob(III)inamide-GDP = adenosylcob(III)alamin + GMP + H(+). It catalyses the reaction alpha-ribazole 5'-phosphate + adenosylcob(III)inamide-GDP = adenosylcob(III)alamin 5'-phosphate + GMP + H(+). It participates in cofactor biosynthesis; adenosylcobalamin biosynthesis; adenosylcobalamin from cob(II)yrinate a,c-diamide: step 7/7. Its function is as follows. Joins adenosylcobinamide-GDP and alpha-ribazole to generate adenosylcobalamin (Ado-cobalamin). Also synthesizes adenosylcobalamin 5'-phosphate from adenosylcobinamide-GDP and alpha-ribazole 5'-phosphate. In Prosthecochloris aestuarii (strain DSM 271 / SK 413), this protein is Adenosylcobinamide-GDP ribazoletransferase.